An 801-amino-acid chain; its full sequence is Probable inorganic carbon transporter subunit DabA (801 aa).

4 residues coordinate Zn(2+): C330, D332, H489, and C504.

It belongs to the inorganic carbon transporter (TC 9.A.2) DabA family. In terms of assembly, forms a complex with DabB. Requires Zn(2+) as cofactor.

The protein localises to the cell inner membrane. In terms of biological role, part of an energy-coupled inorganic carbon pump. The sequence is that of Probable inorganic carbon transporter subunit DabA from Jannaschia sp. (strain CCS1).